Reading from the N-terminus, the 863-residue chain is FO synthase (863 aa).

2 Radical SAM core domains span residues 91–343 and 551–792; these read ITYS…APPN and VTFV…SHIQ. A cofG-like region spans residues 92–424; the sequence is TYSRKVFIPV…PRVRGHVVAL (333 aa). The [4Fe-4S] cluster site is built by Cys105, Cys109, Cys112, Cys565, Cys569, and Cys572. The cofH-like stretch occupies residues 528-861; it reads DGPALEAVTA…RQRTTTYALR (334 aa).

This sequence in the N-terminal section; belongs to the radical SAM superfamily. CofG family. In the C-terminal section; belongs to the radical SAM superfamily. CofH family. The cofactor is [4Fe-4S] cluster.

It catalyses the reaction 5-amino-6-(D-ribitylamino)uracil + L-tyrosine + S-adenosyl-L-methionine = 5-amino-5-(4-hydroxybenzyl)-6-(D-ribitylimino)-5,6-dihydrouracil + 2-iminoacetate + 5'-deoxyadenosine + L-methionine + H(+). It carries out the reaction 5-amino-5-(4-hydroxybenzyl)-6-(D-ribitylimino)-5,6-dihydrouracil + S-adenosyl-L-methionine = 7,8-didemethyl-8-hydroxy-5-deazariboflavin + 5'-deoxyadenosine + L-methionine + NH4(+) + H(+). The protein operates within cofactor biosynthesis; coenzyme F0 biosynthesis. In terms of biological role, catalyzes the radical-mediated synthesis of 7,8-didemethyl-8-hydroxy-5-deazariboflavin (FO) from 5-amino-6-(D-ribitylamino)uracil and L-tyrosine. This is FO synthase (fbiC) from Mycobacterium leprae (strain TN).